The chain runs to 526 residues: Bifunctional purine biosynthesis protein PurH (526 aa).

The region spanning M1–V148 is the MGS-like domain.

It belongs to the PurH family.

It catalyses the reaction (6R)-10-formyltetrahydrofolate + 5-amino-1-(5-phospho-beta-D-ribosyl)imidazole-4-carboxamide = 5-formamido-1-(5-phospho-D-ribosyl)imidazole-4-carboxamide + (6S)-5,6,7,8-tetrahydrofolate. The enzyme catalyses IMP + H2O = 5-formamido-1-(5-phospho-D-ribosyl)imidazole-4-carboxamide. Its pathway is purine metabolism; IMP biosynthesis via de novo pathway; 5-formamido-1-(5-phospho-D-ribosyl)imidazole-4-carboxamide from 5-amino-1-(5-phospho-D-ribosyl)imidazole-4-carboxamide (10-formyl THF route): step 1/1. It functions in the pathway purine metabolism; IMP biosynthesis via de novo pathway; IMP from 5-formamido-1-(5-phospho-D-ribosyl)imidazole-4-carboxamide: step 1/1. The polypeptide is Bifunctional purine biosynthesis protein PurH (Baumannia cicadellinicola subsp. Homalodisca coagulata).